A 356-amino-acid chain; its full sequence is tRNA N6-adenosine threonylcarbamoyltransferase (356 aa).

Fe cation contacts are provided by His114 and His118. Residues 136–140, Asp169, Gly182, and Asn280 each bind substrate; that span reads LVSGG. Asp308 lines the Fe cation pocket. Positions 333-356 are disordered; the sequence is ARPRWPLDNSQPALLGSGKKGAKA.

This sequence belongs to the KAE1 / TsaD family. Fe(2+) serves as cofactor.

Its subcellular location is the cytoplasm. The enzyme catalyses L-threonylcarbamoyladenylate + adenosine(37) in tRNA = N(6)-L-threonylcarbamoyladenosine(37) in tRNA + AMP + H(+). Functionally, required for the formation of a threonylcarbamoyl group on adenosine at position 37 (t(6)A37) in tRNAs that read codons beginning with adenine. Is involved in the transfer of the threonylcarbamoyl moiety of threonylcarbamoyl-AMP (TC-AMP) to the N6 group of A37, together with TsaE and TsaB. TsaD likely plays a direct catalytic role in this reaction. The polypeptide is tRNA N6-adenosine threonylcarbamoyltransferase (Dinoroseobacter shibae (strain DSM 16493 / NCIMB 14021 / DFL 12)).